The chain runs to 470 residues: tRNA(Ile)-lysidine synthase (470 aa).

32-37 (SGGVDS) lines the ATP pocket.

Belongs to the tRNA(Ile)-lysidine synthase family.

It is found in the cytoplasm. It carries out the reaction cytidine(34) in tRNA(Ile2) + L-lysine + ATP = lysidine(34) in tRNA(Ile2) + AMP + diphosphate + H(+). In terms of biological role, ligates lysine onto the cytidine present at position 34 of the AUA codon-specific tRNA(Ile) that contains the anticodon CAU, in an ATP-dependent manner. Cytidine is converted to lysidine, thus changing the amino acid specificity of the tRNA from methionine to isoleucine. The sequence is that of tRNA(Ile)-lysidine synthase from Shewanella woodyi (strain ATCC 51908 / MS32).